We begin with the raw amino-acid sequence, 598 residues long: MTHRNIKIGLEIHFQLNTGKLFCRCPVETSGTEKYRFERHLHVSESEMGRIDAAAKYESERSRTFEYVVTDNSCLVECDEDPPKMPNEDAIATAISVARALNCDILDYITYMRKIVIDGSNTSGFQRTAIIGINGYIETSKGKVRISTVCLEEDAARKIEEKEGTVVYSLDRLGIPLIEISTEPDIIDEEHAVEVAKKIGYYVISTGKSRKAPDSVRQDVNFSMGFGRVEIKGVSKLSQIKEVLKYEIQRQDMLKKASDLIKLRGGFDRSRFYFIDVTDLLVNTSSKVVNSGLKTGRAYAALCTNLAGTLKSGEYRLGKELADLVRAYGLKGLLHSDELPGYGLKESDIQPIYDRLQKDELDGVIILLSPQEKIGIIEEEIANRIEKLISLDLSETRGPTEDSTVFLRPMPGKDRMYPETDIPVIAVSKDILQKSDKIKSVGFEDLVSSIITKYGISKQVAESLASDMKIQELEELSTYLDPRESARVLTQIIPYLEKKYAKKFDNNLIFVLVRLMSDRKFDRYQVEKALEILFSENKDPALIVSDERLIELTKDEICEIIDKLKKSGITITKANVVSVLKKNTDRIFDPSMAIECLG.

The protein belongs to the GatB/GatE family. GatE subfamily. As to quaternary structure, heterodimer of GatD and GatE.

The enzyme catalyses L-glutamyl-tRNA(Gln) + L-glutamine + ATP + H2O = L-glutaminyl-tRNA(Gln) + L-glutamate + ADP + phosphate + H(+). Functionally, allows the formation of correctly charged Gln-tRNA(Gln) through the transamidation of misacylated Glu-tRNA(Gln) in organisms which lack glutaminyl-tRNA synthetase. The reaction takes place in the presence of glutamine and ATP through an activated gamma-phospho-Glu-tRNA(Gln). The GatDE system is specific for glutamate and does not act on aspartate. This Thermoplasma volcanium (strain ATCC 51530 / DSM 4299 / JCM 9571 / NBRC 15438 / GSS1) protein is Glutamyl-tRNA(Gln) amidotransferase subunit E.